The chain runs to 429 residues: Antho-RFamide neuropeptides type 2 (429 aa).

The N-terminal stretch at 1-22 (MTTVSYVTILLTVLVQVLTSDA) is a signal peptide. A propeptide spanning residues 23 to 233 (KATNNKRELS…EFQGRFGRED (211 aa)) is cleaved from the precursor. A compositionally biased stretch (basic and acidic residues) spans 230–371 (GREDQGRFGR…EDIAKEDQGR (142 aa)). Residues 230–429 (GREDQGRFGR…KSDDALAKIS (200 aa)) form a disordered region. At Gln-234 the chain carries Pyrrolidone carboxylic acid. Residue Phe-237 is modified to Phenylalanine amide. Residues 239 to 241 (RED) constitute a propeptide that is removed on maturation. Position 242 is a pyrrolidone carboxylic acid (Gln-242). At Phe-245 the chain carries Phenylalanine amide. Residues 247–249 (RED) constitute a propeptide that is removed on maturation. Pyrrolidone carboxylic acid is present on Gln-250. Phe-253 carries the phenylalanine amide modification. A propeptide spanning residues 255-257 (RED) is cleaved from the precursor. Gln-258 carries the pyrrolidone carboxylic acid modification. Residue Phe-261 is modified to Phenylalanine amide. The propeptide occupies 263–265 (RED). Position 266 is a pyrrolidone carboxylic acid (Gln-266). Position 269 is a phenylalanine amide (Phe-269). The propeptide occupies 271 to 273 (RED). Residue Gln-274 is modified to Pyrrolidone carboxylic acid. Phe-277 carries the post-translational modification Phenylalanine amide. A propeptide spanning residues 279-289 (RELQGRFGRED) is cleaved from the precursor. Gln-290 carries the pyrrolidone carboxylic acid modification. Phe-293 bears the Phenylalanine amide mark. The propeptide occupies 295 to 297 (RED). The residue at position 298 (Gln-298) is a Pyrrolidone carboxylic acid. Position 301 is a phenylalanine amide (Phe-301). A propeptide spanning residues 303-305 (RED) is cleaved from the precursor. Pyrrolidone carboxylic acid is present on Gln-306. Residue Phe-309 is modified to Phenylalanine amide. Residues 311-321 (RELQGRFGRED) constitute a propeptide that is removed on maturation. Gln-322 carries the pyrrolidone carboxylic acid modification. Residue Phe-325 is modified to Phenylalanine amide. The propeptide occupies 327 to 329 (RED). Gln-330 is modified (pyrrolidone carboxylic acid). Phe-333 is subject to Phenylalanine amide. Residues 335 to 342 (REDLAKED) constitute a propeptide that is removed on maturation. At Gln-343 the chain carries Pyrrolidone carboxylic acid. Phe-346 carries the phenylalanine amide modification. A propeptide spanning residues 348 to 355 (REDLAKED) is cleaved from the precursor. Residue Gln-356 is modified to Pyrrolidone carboxylic acid. Residue Phe-359 is modified to Phenylalanine amide. A propeptide spanning residues 361 to 368 (REDIAKED) is cleaved from the precursor. Gln-369 carries the post-translational modification Pyrrolidone carboxylic acid. Phe-372 carries the phenylalanine amide modification. Residues 374–429 (RNAAAAAKKRTIDVIDIESDPKPQTRFRDGKDMQEKRKVEKKDKIEKSDDALAKIS) constitute a propeptide that is removed on maturation. Residues 392–429 (SDPKPQTRFRDGKDMQEKRKVEKKDKIEKSDDALAKIS) are compositionally biased toward basic and acidic residues.

This sequence belongs to the FARP (FMRFamide related peptide) family.

The protein resides in the secreted. In terms of biological role, not known but it could act as a transmitter at neuromuscular synapses. This is Antho-RFamide neuropeptides type 2 from Anthopleura elegantissima (Green aggregating anemone).